The chain runs to 366 residues: Glutathione S-transferase omega-like 3 (366 aa).

Residue C46 is part of the active site. One can recognise a GST C-terminal domain in the interval 197-349 (PRSLEAQITE…LGYTRSQPRV (153 aa)).

The protein belongs to the GST superfamily. Omega family.

Its subcellular location is the cytoplasm. The enzyme catalyses RX + glutathione = an S-substituted glutathione + a halide anion + H(+). In terms of biological role, active as '1-Cys' thiol transferase against beta-hydroxyethyl disulfide (HED), as dehydroascorbate reductase and as dimethylarsinic acid reductase, while not active against the standard GST substrate 1-chloro-2,4-dinitrobenzene (CDNB). This chain is Glutathione S-transferase omega-like 3 (GTO3), found in Saccharomyces cerevisiae (strain ATCC 204508 / S288c) (Baker's yeast).